Consider the following 308-residue polypeptide: Ribosomal RNA small subunit methyltransferase H (308 aa).

S-adenosyl-L-methionine is bound by residues 38-40 (GGH), aspartate 58, phenylalanine 82, aspartate 99, and glutamine 106.

It belongs to the methyltransferase superfamily. RsmH family.

The protein resides in the cytoplasm. It catalyses the reaction cytidine(1402) in 16S rRNA + S-adenosyl-L-methionine = N(4)-methylcytidine(1402) in 16S rRNA + S-adenosyl-L-homocysteine + H(+). Its function is as follows. Specifically methylates the N4 position of cytidine in position 1402 (C1402) of 16S rRNA. This Acidovorax sp. (strain JS42) protein is Ribosomal RNA small subunit methyltransferase H.